The chain runs to 117 residues: NADH-ubiquinone oxidoreductase chain 3 (117 aa).

Transmembrane regions (helical) follow at residues 6–26 (ILIL…ASYI), 58–78 (FFLI…LFPW), and 85–105 (LPLF…LGLI).

Belongs to the complex I subunit 3 family.

The protein localises to the mitochondrion membrane. It catalyses the reaction a ubiquinone + NADH + 5 H(+)(in) = a ubiquinol + NAD(+) + 4 H(+)(out). Its function is as follows. Core subunit of the mitochondrial membrane respiratory chain NADH dehydrogenase (Complex I) that is believed to belong to the minimal assembly required for catalysis. Complex I functions in the transfer of electrons from NADH to the respiratory chain. The immediate electron acceptor for the enzyme is believed to be ubiquinone. This is NADH-ubiquinone oxidoreductase chain 3 (ND3) from Sarcophyton glaucum (Toadstool umbrella leather coral).